The sequence spans 411 residues: Heparan-sulfate 6-O-sulfotransferase 1 (411 aa).

At Met-11–Lys-17 the chain is on the cytoplasmic side. Residues Phe-18 to Gly-37 form a helical; Signal-anchor for type II membrane protein membrane-spanning segment. The Lumenal portion of the chain corresponds to Pro-38–Trp-411. His-93–Thr-101 provides a ligand contact to 3'-phosphoadenylyl sulfate. Substrate contacts are provided by residues Lys-123–Lys-124, Arg-140, Trp-145, and His-150. The Proton acceptor role is filled by His-150. 3'-phosphoadenylyl sulfate contacts are provided by Arg-185 and Ser-193. Substrate is bound by residues His-197 and Trp-204. Asn-264 carries N-linked (GlcNAc...) asparagine glycosylation. Met-317–Tyr-319 contributes to the 3'-phosphoadenylyl sulfate binding site. A glycan (N-linked (GlcNAc...) asparagine) is linked at Asn-320. Residue Arg-323–Ala-324 coordinates 3'-phosphoadenylyl sulfate. Positions Lys-352 to Leu-387 form a coiled coil.

It belongs to the sulfotransferase 6 family. In terms of processing, N-glycosylated. As to expression, expressed in fetal brain.

The protein localises to the membrane. The enzyme catalyses alpha-D-glucosaminyl-[heparan sulfate](n) + 3'-phosphoadenylyl sulfate = 6-sulfo-alpha-D-glucosaminyl-[heparan sulfate](n) + adenosine 3',5'-bisphosphate + H(+). Its function is as follows. 6-O-sulfation enzyme which catalyzes the transfer of sulfate from 3'-phosphoadenosine 5'-phosphosulfate (PAPS) to position 6 of the N-sulfoglucosamine residue (GlcNS) of heparan sulfate. Critical for normal neuronal development where it may play a role in neuron branching. May also play a role in limb development. May prefer iduronic acid. This chain is Heparan-sulfate 6-O-sulfotransferase 1, found in Homo sapiens (Human).